A 337-amino-acid polypeptide reads, in one-letter code: MNAPQTNDTAADGAATEAIAADSGRRALTRREQKEAYENNKLFKRIARQVGQAIGDYNMIEAGDKVMVCLSGGKDSYAMLDVLLRLRERAPIDFDIVAVNLDQKQPGFPEHVLPEYLTQIGVPFHIENQDTYSIVKRLVPEGKTTCSLCSRLRRGILYRVAGELGATKIALGHHRDDILQTLLLNMFYGGKLKGMPPKLQSDDGRNVVIRPLAYVKETDLEKYAELREFPIIPCNLCGSQPNLKRAEMKALIREWDKRFPGRVDNMFSALANVVPSHLMDTGLFPFASLRATGVADPLGDIAFDEEPCASGDATGDAAGNTTSGAARPISIVQFDDL.

A PP-loop motif motif is present at residues 71-76 (SGGKDS). [4Fe-4S] cluster-binding residues include Cys146, Cys149, and Cys237.

The protein belongs to the TtcA family. As to quaternary structure, homodimer. Requires Mg(2+) as cofactor. [4Fe-4S] cluster is required as a cofactor.

The protein localises to the cytoplasm. It carries out the reaction cytidine(32) in tRNA + S-sulfanyl-L-cysteinyl-[cysteine desulfurase] + AH2 + ATP = 2-thiocytidine(32) in tRNA + L-cysteinyl-[cysteine desulfurase] + A + AMP + diphosphate + H(+). The protein operates within tRNA modification. In terms of biological role, catalyzes the ATP-dependent 2-thiolation of cytidine in position 32 of tRNA, to form 2-thiocytidine (s(2)C32). The sulfur atoms are provided by the cysteine/cysteine desulfurase (IscS) system. The polypeptide is tRNA-cytidine(32) 2-sulfurtransferase (Burkholderia vietnamiensis (strain G4 / LMG 22486) (Burkholderia cepacia (strain R1808))).